Here is a 111-residue protein sequence, read N- to C-terminus: MFAIICMNSLNCNRNGRISSRASLICLHTLSLVSFSFLANITCKSSSLTPAGIIESIPVVFTAVVSVLRCLIEEVLVTVSVVLFKISLGAIPKILRKVLVLYIILYYIILY.

3 helical membrane passes run 22 to 42, 48 to 68, and 75 to 95; these read ASLICLHTLSLVSFSFLANIT, LTPAGIIESIPVVFTAVVSVL, and VLVTVSVVLFKISLGAIPKIL.

It localises to the membrane. This is an uncharacterized protein from Saccharomyces cerevisiae (strain ATCC 204508 / S288c) (Baker's yeast).